A 130-amino-acid chain; its full sequence is Small ribosomal subunit protein uS8A (130 aa).

It belongs to the universal ribosomal protein uS8 family. Component of the small ribosomal subunit (SSU). Mature yeast ribosomes consist of a small (40S) and a large (60S) subunit. The 40S small subunit contains 1 molecule of ribosomal RNA (18S rRNA) and 33 different proteins (encoded by 57 genes). The large 60S subunit contains 3 rRNA molecules (25S, 5.8S and 5S rRNA) and 46 different proteins (encoded by 81 genes).

Its subcellular location is the cytoplasm. Functionally, component of the ribosome, a large ribonucleoprotein complex responsible for the synthesis of proteins in the cell. The small ribosomal subunit (SSU) binds messenger RNAs (mRNAs) and translates the encoded message by selecting cognate aminoacyl-transfer RNA (tRNA) molecules. The large subunit (LSU) contains the ribosomal catalytic site termed the peptidyl transferase center (PTC), which catalyzes the formation of peptide bonds, thereby polymerizing the amino acids delivered by tRNAs into a polypeptide chain. The nascent polypeptides leave the ribosome through a tunnel in the LSU and interact with protein factors that function in enzymatic processing, targeting, and the membrane insertion of nascent chains at the exit of the ribosomal tunnel. The chain is Small ribosomal subunit protein uS8A from Saccharomyces cerevisiae (strain ATCC 204508 / S288c) (Baker's yeast).